The sequence spans 1079 residues: DNA annealing helicase and endonuclease ZRANB3 (1079 aa).

Residues 46-208 (IFALKRNGRC…FMQIEALFPQ (163 aa)) enclose the Helicase ATP-binding domain. Positions 46–481 (IFALKRNGRC…GRKEKIQAEE (436 aa)) are DNA annealing helicase activity. 59 to 66 (DEMGLGKT) contributes to the ATP binding site. A DEAH box motif is present at residues 157 to 160 (DESH). In terms of domain architecture, Helicase C-terminal spans 325 to 481 (AVKDYIKMML…GRKEKIQAEE (157 aa)). Positions 519 to 526 (QHDIRSFF) match the PIP-box motif. Phosphoserine is present on Ser-569. The interval 582 to 601 (ASEDHCSPSEETPSQSKQIR) is disordered. The segment covering 590 to 600 (SEETPSQSKQI) has biased composition (polar residues). The RanBP2-type zinc finger occupies 621–650 (PVEGWQCSLCTYINNSELPYCEMCETPQGS). Residue Cys-630 is modified to (Microbial infection) S-methylcysteine. The interval 689 to 725 (LAQSEPGQLADSKEETPKIEKEDGLTSQPGNEQWKSS) is disordered. A compositionally biased stretch (basic and acidic residues) spans 699 to 712 (DSKEETPKIEKEDG). A compositionally biased stretch (polar residues) spans 713–725 (LTSQPGNEQWKSS). Residues 1011 to 1051 (PGEGHFWQVDHIKPVYGGGGQCSLDNLQTLCTVCHKERTAR) form the HNH domain. The endonuclease activity stretch occupies residues 1011–1079 (PGEGHFWQVD…SDITRFLVKK (69 aa)). The APIM motif motif lies at 1074–1078 (RFLVK).

Belongs to the SNF2/RAD54 helicase family. Interacts (via PIP-box and RanBP2-type zinc finger) with PCNA (when PCNA is polyubiquitinated via 'Lys-63'-linked polyubiquitin). In terms of processing, (Microbial infection) Methylation at Cys-630 by enteropathogenic E.coli protein NleE or S.flexneri protein OspZ: methylation disrupts ability to bind 'Lys-63'-linked ubiquitin.

It localises to the nucleus. The protein resides in the chromosome. Its function is as follows. DNA annealing helicase and endonuclease required to maintain genome stability at stalled or collapsed replication forks by facilitating fork restart and limiting inappropriate recombination that could occur during template switching events. Recruited to the sites of stalled DNA replication by polyubiquitinated PCNA and acts as a structure-specific endonuclease that cleaves the replication fork D-loop intermediate, generating an accessible 3'-OH group in the template of the leading strand, which is amenable to extension by DNA polymerase. In addition to endonuclease activity, also catalyzes the fork regression via annealing helicase activity in order to prevent disintegration of the replication fork and the formation of double-strand breaks. The polypeptide is DNA annealing helicase and endonuclease ZRANB3 (Homo sapiens (Human)).